A 187-amino-acid polypeptide reads, in one-letter code: Hypoxanthine/guanine phosphoribosyltransferase (187 aa).

This sequence belongs to the purine/pyrimidine phosphoribosyltransferase family. Archaeal HPRT subfamily. As to quaternary structure, homodimer.

Its subcellular location is the cytoplasm. The catalysed reaction is IMP + diphosphate = hypoxanthine + 5-phospho-alpha-D-ribose 1-diphosphate. It catalyses the reaction GMP + diphosphate = guanine + 5-phospho-alpha-D-ribose 1-diphosphate. Its pathway is purine metabolism; IMP biosynthesis via salvage pathway; IMP from hypoxanthine: step 1/1. In terms of biological role, catalyzes a salvage reaction resulting in the formation of IMP that is energically less costly than de novo synthesis. In Methanococcus voltae (strain ATCC BAA-1334 / A3), this protein is Hypoxanthine/guanine phosphoribosyltransferase.